The chain runs to 686 residues: Pollen receptor-like kinase 5 (686 aa).

Residues M1–S39 form the signal peptide. Residues Q40–L283 are Extracellular-facing. The N-linked (GlcNAc...) asparagine glycan is linked to N60. LRR repeat units lie at residues M112–F135, T136–G159, P161–L184, P185–D208, and K210–M230. A helical membrane pass occupies residues A284 to V304. At Q305 to R686 the chain is on the cytoplasmic side. Polar residues predominate over residues N328 to P339. The disordered stretch occupies residues N328 to G355. One can recognise a Protein kinase domain in the interval R375–L648. Residue S377 is modified to Phosphoserine. Residues L381–S389 and K403 contribute to the ATP site. S455 and S458 each carry phosphoserine. The residue at position 472 (T472) is a Phosphothreonine. The residue at position 542 (Y542) is a Phosphotyrosine. S545 carries the phosphoserine modification.

It belongs to the protein kinase superfamily. Ser/Thr protein kinase family. Interacts with the GRI peptide. Expressed in pollen and/or in flowers. Detected at low levels in leaves.

The protein resides in the cell membrane. It carries out the reaction L-seryl-[protein] + ATP = O-phospho-L-seryl-[protein] + ADP + H(+). The enzyme catalyses L-threonyl-[protein] + ATP = O-phospho-L-threonyl-[protein] + ADP + H(+). Its function is as follows. Receptor-like kinase involved in the control of pollen germination and pollen tube polar growth. The extracellular domain serves as a sensor for peptides derived from GRI. May act as a downstream element for ROS-dependent cell death induced by GRI. The chain is Pollen receptor-like kinase 5 from Arabidopsis thaliana (Mouse-ear cress).